A 563-amino-acid polypeptide reads, in one-letter code: DEAD-box ATP-dependent RNA helicase 25 (563 aa).

The disordered stretch occupies residues 21–57 (KKLTSDEDGSGKLVKDNNKSLKRGREGKSDVDEPLIK). Residues 23–56 (LTSDEDGSGKLVKDNNKSLKRGREGKSDVDEPLI) are compositionally biased toward basic and acidic residues. S25 carries the phosphoserine modification. The short motif at 80–108 (TRFDQFPLSPLTLKGIEDAGFKTMTVVQE) is the Q motif element. One can recognise a Helicase ATP-binding domain in the interval 111 to 294 (LPLILQGKDI…HVALKRDHEF (184 aa)). 124 to 131 (AKTGTGKT) serves as a coordination point for ATP. Positions 242-245 (DEAD) match the DEAD box motif. The Helicase C-terminal domain maps to 328–479 (LLKKHITDNV…AVKKVQKGLI (152 aa)).

This sequence belongs to the DEAD box helicase family.

The enzyme catalyses ATP + H2O = ADP + phosphate + H(+). This Arabidopsis thaliana (Mouse-ear cress) protein is DEAD-box ATP-dependent RNA helicase 25 (RH25).